The primary structure comprises 226 residues: ATP synthase F(0) complex subunit a (226 aa).

6 consecutive transmembrane segments (helical) span residues Phe-6 to Phe-26, Trp-68 to Leu-88, Gln-97 to Phe-117, Val-138 to Val-158, Ile-164 to Ile-184, and Phe-193 to Val-213.

It belongs to the ATPase A chain family. As to quaternary structure, component of the ATP synthase complex composed at least of ATP5F1A/subunit alpha, ATP5F1B/subunit beta, ATP5MC1/subunit c (homooctomer), MT-ATP6/subunit a, MT-ATP8/subunit 8, ATP5ME/subunit e, ATP5MF/subunit f, ATP5MG/subunit g, ATP5MK/subunit k, ATP5MJ/subunit j, ATP5F1C/subunit gamma, ATP5F1D/subunit delta, ATP5F1E/subunit epsilon, ATP5PF/subunit F6, ATP5PB/subunit b, ATP5PD/subunit d, ATP5PO/subunit OSCP. ATP synthase complex consists of a soluble F(1) head domain (subunits alpha(3) and beta(3)) - the catalytic core - and a membrane F(0) domain - the membrane proton channel (subunits c, a, 8, e, f, g, k and j). These two domains are linked by a central stalk (subunits gamma, delta, and epsilon) rotating inside the F1 region and a stationary peripheral stalk (subunits F6, b, d, and OSCP). Interacts with DNAJC30; interaction is direct.

It localises to the mitochondrion inner membrane. The catalysed reaction is H(+)(in) = H(+)(out). In terms of biological role, subunit a, of the mitochondrial membrane ATP synthase complex (F(1)F(0) ATP synthase or Complex V) that produces ATP from ADP in the presence of a proton gradient across the membrane which is generated by electron transport complexes of the respiratory chain. ATP synthase complex consist of a soluble F(1) head domain - the catalytic core - and a membrane F(1) domain - the membrane proton channel. These two domains are linked by a central stalk rotating inside the F(1) region and a stationary peripheral stalk. During catalysis, ATP synthesis in the catalytic domain of F(1) is coupled via a rotary mechanism of the central stalk subunits to proton translocation. With the subunit c (ATP5MC1), forms the proton-conducting channel in the F(0) domain, that contains two crucial half-channels (inlet and outlet) that facilitate proton movement from the mitochondrial intermembrane space (IMS) into the matrix. Protons are taken up via the inlet half-channel and released through the outlet half-channel, following a Grotthuss mechanism. The polypeptide is ATP synthase F(0) complex subunit a (Osphranter robustus (Wallaroo)).